The primary structure comprises 207 residues: A disintegrin and metalloproteinase with thrombospondin motifs 5 (207 aa).

The Peptidase M12B domain maps to 1 to 74; the sequence is HAAFTVAHEI…GHGNCLLDLP (74 aa). Histidine 8 is a Zn(2+) binding site. Glutamate 9 is a catalytic residue. The Zn(2+) site is built by histidine 12 and histidine 18. Cystine bridges form between cysteine 24–cysteine 53, cysteine 95–cysteine 117, cysteine 106–cysteine 127, cysteine 112–cysteine 146, and cysteine 140–cysteine 151. The 82-residue stretch at 83–164 folds into the Disintegrin domain; it reads ELPGQTYDAS…TKKKYYSTSS (82 aa). Residue asparagine 96 is glycosylated (N-linked (GlcNAc...) asparagine). The region spanning 165–205 is the TSP type-1 domain; sequence HGNWGSWGSWGQCSRSCGGGVQFAYRHCNNPAPKNNGRYCT. Residues tryptophan 168 and tryptophan 171 are each glycosylated (C-linked (Man) tryptophan). A glycan (O-linked (Fuc...) serine) is linked at serine 180.

Requires Zn(2+) as cofactor. The precursor is cleaved by furin and PCSK7 outside of the cell. Post-translationally, glycosylated. Can be O-fucosylated by POFUT2 on a serine or a threonine residue found within the consensus sequence C1-X(2)-(S/T)-C2-G of the TSP type-1 repeat domains where C1 and C2 are the first and second cysteine residue of the repeat, respectively. Fucosylated repeats can then be further glycosylated by the addition of a beta-1,3-glucose residue by the glucosyltransferase, B3GALTL. Fucosylation mediates the efficient secretion of ADAMTS family members. Can also be C-glycosylated with one or two mannose molecules on tryptophan residues within the consensus sequence W-X-X-W of the TPRs, and N-glycosylated. These other glycosylations can also facilitate secretion.

The protein resides in the secreted. Its subcellular location is the extracellular space. It localises to the extracellular matrix. Its function is as follows. Metalloproteinase that plays an important role in connective tissue organization, development, inflammation and cell migration. Extracellular matrix (ECM) degrading enzyme that shows proteolytic activity toward the hyalectan group of chondroitin sulfate proteoglycans (CSPGs) including ACAN, VCAN, BCAN and NCAN. Cleavage within the hyalectans occurs at Glu-Xaa recognition motifs. Plays a role in embryonic development, including limb and cardiac morphogenesis, and skeletal muscle development through its VCAN remodeling properties. Cleaves VCAN in the pericellular matrix surrounding myoblasts, facilitating myoblast contact and fusion which is required for skeletal muscle development and regeneration. Participates in the development of brown adipose tissue and browning of white adipose tissue. Plays an important role for T-lymphocyte migration from draining lymph nodes following viral infection. The chain is A disintegrin and metalloproteinase with thrombospondin motifs 5 (ADAMTS5) from Bos taurus (Bovine).